A 497-amino-acid polypeptide reads, in one-letter code: Glycerol kinase (497 aa).

An ADP-binding site is contributed by Thr12. Thr12, Thr13, and Ser14 together coordinate ATP. Thr12 is a sn-glycerol 3-phosphate binding site. An ADP-binding site is contributed by Arg16. Sn-glycerol 3-phosphate contacts are provided by Arg82, Glu83, Tyr134, and Asp243. Glycerol contacts are provided by Arg82, Glu83, Tyr134, Asp243, and Gln244. ADP contacts are provided by Thr265 and Gly308. ATP-binding residues include Thr265, Gly308, Gln312, and Gly409. 2 residues coordinate ADP: Gly409 and Asn413.

Belongs to the FGGY kinase family. As to quaternary structure, homotetramer and homodimer (in equilibrium).

It catalyses the reaction glycerol + ATP = sn-glycerol 3-phosphate + ADP + H(+). Its pathway is polyol metabolism; glycerol degradation via glycerol kinase pathway; sn-glycerol 3-phosphate from glycerol: step 1/1. Activated by phosphorylation and inhibited by fructose 1,6-bisphosphate (FBP). Functionally, key enzyme in the regulation of glycerol uptake and metabolism. Catalyzes the phosphorylation of glycerol to yield sn-glycerol 3-phosphate. This is Glycerol kinase from Thermoanaerobacter sp. (strain X514).